Reading from the N-terminus, the 878-residue chain is NUT family member 2E (878 aa).

Disordered regions lie at residues 273–324 (WSQG…DDSC), 417–511 (QKSQ…VPEE), 527–560 (LLGP…PPDP), 622–757 (RLPP…EEEE), and 775–878 (WLPQ…HCSQ). 2 stretches are compositionally biased toward pro residues: residues 278-288 (PLPPPPPPAAQ) and 427-444 (CLPP…PPAP). Basic and acidic residues-rich tracts occupy residues 537-551 (EPEK…KQPQ) and 622-631 (RLPPLKEKQH).

Belongs to the NUT family.

This Homo sapiens (Human) protein is NUT family member 2E (NUTM2E).